Here is a 299-residue protein sequence, read N- to C-terminus: Small ribosomal subunit biogenesis GTPase RsgA (299 aa).

The 160-residue stretch at 73–232 folds into the CP-type G domain; sequence CSWLTRPQVA…VADTPGFNRP (160 aa). GTP is bound by residues 122 to 125 and 174 to 182; these read TKGD and GPSGVGKSS. Zn(2+) contacts are provided by cysteine 257, cysteine 262, histidine 264, and cysteine 270.

It belongs to the TRAFAC class YlqF/YawG GTPase family. RsgA subfamily. As to quaternary structure, monomer. Associates with 30S ribosomal subunit, binds 16S rRNA. Zn(2+) is required as a cofactor.

The protein localises to the cytoplasm. Functionally, one of several proteins that assist in the late maturation steps of the functional core of the 30S ribosomal subunit. Helps release RbfA from mature subunits. May play a role in the assembly of ribosomal proteins into the subunit. Circularly permuted GTPase that catalyzes slow GTP hydrolysis, GTPase activity is stimulated by the 30S ribosomal subunit. This Parasynechococcus marenigrum (strain WH8102) protein is Small ribosomal subunit biogenesis GTPase RsgA.